The chain runs to 253 residues: Indole-3-glycerol phosphate synthase (253 aa).

This sequence belongs to the TrpC family.

It carries out the reaction 1-(2-carboxyphenylamino)-1-deoxy-D-ribulose 5-phosphate + H(+) = (1S,2R)-1-C-(indol-3-yl)glycerol 3-phosphate + CO2 + H2O. It functions in the pathway amino-acid biosynthesis; L-tryptophan biosynthesis; L-tryptophan from chorismate: step 4/5. The polypeptide is Indole-3-glycerol phosphate synthase (Bacillus cereus (strain ATCC 14579 / DSM 31 / CCUG 7414 / JCM 2152 / NBRC 15305 / NCIMB 9373 / NCTC 2599 / NRRL B-3711)).